Consider the following 151-residue polypeptide: Protein ECM12 (151 aa).

Asn-2 carries N-linked (GlcNAc...) asparagine glycosylation. The next 2 membrane-spanning stretches (helical) occupy residues 17–37 (LLVFYFHIKQQAIMPFFIFFF) and 51–71 (AFLAKHVFVGVCSPFFVVGFF). N-linked (GlcNAc...) asparagine glycosylation is found at Asn-132 and Asn-137.

The protein localises to the membrane. Its function is as follows. May be involved in cell wall organization and biogenesis. This Saccharomyces cerevisiae (strain ATCC 204508 / S288c) (Baker's yeast) protein is Protein ECM12 (ECM12).